The primary structure comprises 470 residues: Sperm-associated antigen 8 (470 aa).

Residues Met1–Ser21 are compositionally biased toward polar residues. Disordered stretches follow at residues Met1 to His70, Ser117 to Pro178, and Leu302 to Gln321. Positions Pro27–Ala48 are enriched in low complexity. A compositionally biased stretch (polar residues) spans Ser51–Ser60. 2 stretches are compositionally biased toward low complexity: residues Leu122–Gly175 and Thr303–Gln316. Mn regions lie at residues Ser312 to His325 and Glu364 to Ala378.

This sequence belongs to the SPAG8 family. Microtubule inner protein component of sperm flagellar doublet microtubules. Interacts with FHL5 (via second LIM domain). Interacts with RANBP9. As to expression, expressed in testis (at protein level). Not detected in brain, heart, kidney, spleen, liver, lung, thymus and colon (at protein level).

The protein localises to the cytoplasm. It is found in the nucleus. Its subcellular location is the cytoplasmic vesicle. It localises to the secretory vesicle. The protein resides in the acrosome. The protein localises to the cytoskeleton. It is found in the microtubule organizing center. Its subcellular location is the spindle. It localises to the cilium axoneme. The protein resides in the flagellum axoneme. Microtubule inner protein (MIP) part of the dynein-decorated doublet microtubules (DMTs) in cilia axoneme, which is required for motile cilia beating. Plays a role in spermatogenesis by enhancing the binding of CREM isoform tau to its coactivator FHL5 and increasing the FHL5-regulated transcriptional activation of CREM isoform tau. Involved in the acrosome reaction and in binding of sperm to the zona pellucida. Plays a role in regulation of the cell cycle by controlling progression through the G2/M phase, possibly by delaying the activation of CDK1 which is required for entry into mitosis. May play a role in fertility and microtubule formation through interaction with RANBP9. The chain is Sperm-associated antigen 8 from Mus musculus (Mouse).